Reading from the N-terminus, the 335-residue chain is Peroxidase 2 (335 aa).

Positions 1 to 29 are cleaved as a signal peptide; the sequence is MAAATAPKTMPSSVFAAALLLLAAAACQA. Disulfide bonds link Cys-44-Cys-125, Cys-77-Cys-82, Cys-131-Cys-329, and Cys-212-Cys-238. The active-site Proton acceptor is His-75. Positions 76, 79, 81, 83, and 85 each coordinate Ca(2+). 2 N-linked (GlcNAc...) asparagine glycosylation sites follow: Asn-166 and Asn-180. His-205 provides a ligand contact to heme b. Thr-206 is a binding site for Ca(2+). Asn-241 is a glycosylation site (N-linked (GlcNAc...) asparagine). Ca(2+) contacts are provided by Asp-253, Thr-256, and Asp-261.

This sequence belongs to the peroxidase family. Classical plant (class III) peroxidase subfamily. Heme b serves as cofactor. It depends on Ca(2+) as a cofactor. Expressed in the elongating region of young roots, and in root vascular tissues and epidermis.

It localises to the secreted. It carries out the reaction 2 a phenolic donor + H2O2 = 2 a phenolic radical donor + 2 H2O. Its function is as follows. Removal of H(2)O(2), oxidation of toxic reductants, biosynthesis and degradation of lignin, suberization, auxin catabolism, response to environmental stresses such as wounding, pathogen attack and oxidative stress. These functions might be dependent on each isozyme/isoform in each plant tissue. The polypeptide is Peroxidase 2 (PER2) (Zea mays (Maize)).